The following is a 408-amino-acid chain: Chaperone protein dnaJ 1, mitochondrial (408 aa).

The transit peptide at 1–26 directs the protein to the mitochondrion; the sequence is MRRFNWVLRHVQARRTFDSAIGLRQG. The J domain maps to 48-113; the sequence is NYYDVLGVSP…ERREEYDKLQ (66 aa). The CR-type zinc-finger motif lies at 173 to 247; sequence GCTKRLSFDA…CRGSGIVEGT (75 aa). Residues Cys-186, Cys-189, Cys-203, Cys-206, Cys-221, Cys-224, Cys-235, and Cys-238 each contribute to the Zn(2+) site. 4 CXXCXGXG motif repeats span residues 186–193, 203–210, 221–228, and 235–242; these read CDSCDGLG, CPTCRGVG, CQTCKGTG, and CMSCRGSG.

This sequence belongs to the DnaJ family. B/II subfamily. As to quaternary structure, homodimer. Requires Zn(2+) as cofactor. Ubiquitous.

The protein localises to the mitochondrion. Functionally, plays a continuous role in plant development probably in the structural organization of compartments. This chain is Chaperone protein dnaJ 1, mitochondrial (ATJ1), found in Arabidopsis thaliana (Mouse-ear cress).